We begin with the raw amino-acid sequence, 102 residues long: Protein RnfH (102 aa).

It belongs to the UPF0125 (RnfH) family.

In Pseudomonas entomophila (strain L48), this protein is Protein RnfH.